Reading from the N-terminus, the 299-residue chain is tRNA pseudouridine synthase B (299 aa).

The active-site Nucleophile is the aspartate 38.

Belongs to the pseudouridine synthase TruB family. Type 1 subfamily.

The catalysed reaction is uridine(55) in tRNA = pseudouridine(55) in tRNA. Functionally, responsible for synthesis of pseudouridine from uracil-55 in the psi GC loop of transfer RNAs. In Pediococcus pentosaceus (strain ATCC 25745 / CCUG 21536 / LMG 10740 / 183-1w), this protein is tRNA pseudouridine synthase B.